A 420-amino-acid polypeptide reads, in one-letter code: Serine hydroxymethyltransferase (420 aa).

(6S)-5,6,7,8-tetrahydrofolate-binding positions include leucine 123 and 127–129; that span reads GHL. Position 232 is an N6-(pyridoxal phosphate)lysine (lysine 232).

The protein belongs to the SHMT family. In terms of assembly, homodimer. Pyridoxal 5'-phosphate is required as a cofactor.

The protein resides in the cytoplasm. The enzyme catalyses (6R)-5,10-methylene-5,6,7,8-tetrahydrofolate + glycine + H2O = (6S)-5,6,7,8-tetrahydrofolate + L-serine. It participates in one-carbon metabolism; tetrahydrofolate interconversion. Its pathway is amino-acid biosynthesis; glycine biosynthesis; glycine from L-serine: step 1/1. Catalyzes the reversible interconversion of serine and glycine with tetrahydrofolate (THF) serving as the one-carbon carrier. This reaction serves as the major source of one-carbon groups required for the biosynthesis of purines, thymidylate, methionine, and other important biomolecules. Also exhibits THF-independent aldolase activity toward beta-hydroxyamino acids, producing glycine and aldehydes, via a retro-aldol mechanism. The protein is Serine hydroxymethyltransferase of Ehrlichia chaffeensis (strain ATCC CRL-10679 / Arkansas).